The primary structure comprises 297 residues: Vacuolar protein sorting-associated protein 26C (297 aa).

This sequence belongs to the VPS26 family. Component of the commander complex that is essential for endosomal recycling of transmembrane cargos; the commander complex is composed of the CCC subcomplex and the retriever subcomplex. Component of the heterotrimeric retriever complex consisting of VPS26C, VPS29 and VPS35L; within the complex interacts with VPS35L. Interacts with SNX17 (via C-terminus); the interaction is direct and associates SNX17 with the retriever complex. Interacts with SNX31; the interaction is direct. As to expression, ubiquitously expressed.

Its subcellular location is the endosome. Its function is as follows. Component of the commander complex that is essential for endosomal recycling of transmembrane cargos; the commander complex is composed of the CCC subcomplex and the retriever subcomplex. Component of the retriever complex, which is a heterotrimeric complex related to retromer cargo-selective complex (CSC) and essential for retromer-independent retrieval and recycling of numerous cargos such as integrin alpha-5/beta-1 (ITGA5:ITGB1). The recruitment of the retriever complex to the endosomal membrane involves CCC and WASH complexes. In the endosomes, drives the retriever and recycling of NxxY-motif-containing cargo proteins by coupling to SNX17, a cargo essential for the homeostatic maintenance of numerous cell surface proteins associated with processes that include cell migration, cell adhesion, nutrient supply and cell signaling. In terms of biological role, (Microbial infection) The heterotrimeric retriever complex, in collaboration with the CCC complex, mediates the exit of human papillomavirus to the cell surface. The chain is Vacuolar protein sorting-associated protein 26C from Homo sapiens (Human).